The primary structure comprises 358 residues: uncharacterized protein (358 aa).

It belongs to the serpin family. Poxviruses subfamily.

This is an uncharacterized protein from Fowlpox virus (strain NVSL) (FPV).